Consider the following 467-residue polypeptide: UDP-N-acetylmuramoylalanine--D-glutamate ligase (467 aa).

Position 121–127 (G121–T127) interacts with ATP.

Belongs to the MurCDEF family.

The protein resides in the cytoplasm. It catalyses the reaction UDP-N-acetyl-alpha-D-muramoyl-L-alanine + D-glutamate + ATP = UDP-N-acetyl-alpha-D-muramoyl-L-alanyl-D-glutamate + ADP + phosphate + H(+). Its pathway is cell wall biogenesis; peptidoglycan biosynthesis. Functionally, cell wall formation. Catalyzes the addition of glutamate to the nucleotide precursor UDP-N-acetylmuramoyl-L-alanine (UMA). The chain is UDP-N-acetylmuramoylalanine--D-glutamate ligase from Brucella suis biovar 1 (strain 1330).